A 158-amino-acid chain; its full sequence is Ribonuclease H (158 aa).

The RNase H type-1 domain occupies 9 to 155; sequence AFKPVELYTD…CDKLAVAAYQ (147 aa). Asp18, Glu58, Asp80, and Asp147 together coordinate Mg(2+).

It belongs to the RNase H family. As to quaternary structure, monomer. Mg(2+) serves as cofactor.

Its subcellular location is the cytoplasm. The catalysed reaction is Endonucleolytic cleavage to 5'-phosphomonoester.. Its function is as follows. Endonuclease that specifically degrades the RNA of RNA-DNA hybrids. This chain is Ribonuclease H, found in Rhodopirellula baltica (strain DSM 10527 / NCIMB 13988 / SH1).